Reading from the N-terminus, the 900-residue chain is Probable beta-mannosidase (900 aa).

An N-terminal signal peptide occupies residues 1-21; it reads MRTSLVVCLFWLLFQLHTTHG. Residues asparagine 38, asparagine 42, and asparagine 131 are each glycosylated (N-linked (GlcNAc...) asparagine). Glutamate 463 (proton donor) is an active-site residue. 4 N-linked (GlcNAc...) asparagine glycosylation sites follow: asparagine 477, asparagine 576, asparagine 661, and asparagine 738.

The protein belongs to the glycosyl hydrolase 2 family.

Its subcellular location is the lysosome. It carries out the reaction Hydrolysis of terminal, non-reducing beta-D-mannose residues in beta-D-mannosides.. This chain is Probable beta-mannosidase, found in Caenorhabditis elegans.